We begin with the raw amino-acid sequence, 357 residues long: GTPase Obg (357 aa).

In terms of domain architecture, Obg spans 1–159; the sequence is MKFVDEAFID…RNLKLELKVL (159 aa). An OBG-type G domain is found at 160 to 334; that stretch reads ADVGLLGMPN…LVQSIFQHVH (175 aa). Residues 166 to 173, 191 to 195, 213 to 216, 284 to 287, and 315 to 317 each bind GTP; these read GMPNAGKS, FTTLH, DIPG, NKLD, and SAL. Positions 173 and 193 each coordinate Mg(2+).

This sequence belongs to the TRAFAC class OBG-HflX-like GTPase superfamily. OBG GTPase family. As to quaternary structure, monomer. Requires Mg(2+) as cofactor.

It localises to the cytoplasm. In terms of biological role, an essential GTPase which binds GTP, GDP and possibly (p)ppGpp with moderate affinity, with high nucleotide exchange rates and a fairly low GTP hydrolysis rate. Plays a role in control of the cell cycle, stress response, ribosome biogenesis and in those bacteria that undergo differentiation, in morphogenesis control. This Acidovorax ebreus (strain TPSY) (Diaphorobacter sp. (strain TPSY)) protein is GTPase Obg.